The sequence spans 73 residues: UPF0435 protein lwe1727 (73 aa).

Belongs to the UPF0435 family.

This Listeria welshimeri serovar 6b (strain ATCC 35897 / DSM 20650 / CCUG 15529 / CIP 8149 / NCTC 11857 / SLCC 5334 / V8) protein is UPF0435 protein lwe1727.